The sequence spans 426 residues: Serine hydroxymethyltransferase (426 aa).

(6S)-5,6,7,8-tetrahydrofolate contacts are provided by residues Leu118 and 122 to 124 (GHL). Lys227 carries the post-translational modification N6-(pyridoxal phosphate)lysine.

It belongs to the SHMT family. In terms of assembly, homodimer. Pyridoxal 5'-phosphate serves as cofactor.

The protein resides in the cytoplasm. The catalysed reaction is (6R)-5,10-methylene-5,6,7,8-tetrahydrofolate + glycine + H2O = (6S)-5,6,7,8-tetrahydrofolate + L-serine. It functions in the pathway one-carbon metabolism; tetrahydrofolate interconversion. The protein operates within amino-acid biosynthesis; glycine biosynthesis; glycine from L-serine: step 1/1. Catalyzes the reversible interconversion of serine and glycine with tetrahydrofolate (THF) serving as the one-carbon carrier. This reaction serves as the major source of one-carbon groups required for the biosynthesis of purines, thymidylate, methionine, and other important biomolecules. Also exhibits THF-independent aldolase activity toward beta-hydroxyamino acids, producing glycine and aldehydes, via a retro-aldol mechanism. The protein is Serine hydroxymethyltransferase of Mycobacterium leprae (strain Br4923).